The chain runs to 317 residues: Putative pyridoxal kinase BUD17 (317 aa).

Substrate-binding residues include S16 and Y128. ATP-binding positions include 190–191 (TS) and 220–232 (EIPK…SGSG). Position 233 (D233) interacts with substrate.

It belongs to the pyridoxine kinase family. Requires a divalent metal cation as cofactor.

Its subcellular location is the cytoplasm. It localises to the nucleus. The catalysed reaction is pyridoxal + ATP = pyridoxal 5'-phosphate + ADP + H(+). Functionally, required for synthesis of pyridoxal-5-phosphate from vitamin B6. Important for bud site selection. The sequence is that of Putative pyridoxal kinase BUD17 (BUD17) from Saccharomyces cerevisiae (strain ATCC 204508 / S288c) (Baker's yeast).